A 190-amino-acid polypeptide reads, in one-letter code: Small ribosomal subunit protein eS7 (190 aa).

It belongs to the eukaryotic ribosomal protein eS7 family.

This Avicennia marina (Grey mangrove) protein is Small ribosomal subunit protein eS7 (RPS7).